We begin with the raw amino-acid sequence, 396 residues long: Ribosomal RNA large subunit methyltransferase I (396 aa).

The PUA domain maps to 2–81; sequence TVRLILAKGR…EVIDCAFFIR (80 aa).

The protein belongs to the methyltransferase superfamily. RlmI family.

The protein resides in the cytoplasm. It carries out the reaction cytidine(1962) in 23S rRNA + S-adenosyl-L-methionine = 5-methylcytidine(1962) in 23S rRNA + S-adenosyl-L-homocysteine + H(+). Specifically methylates the cytosine at position 1962 (m5C1962) of 23S rRNA. The polypeptide is Ribosomal RNA large subunit methyltransferase I (Yersinia pestis bv. Antiqua (strain Antiqua)).